The sequence spans 740 residues: MEHTYQYSWIIPFIPLPVPILLGVGLLLFPTATKNLRRTWSFLSIFLLSIVMIFSLYLSIQQIIISCIHQNVWSWTINNDLSFEFGYFIDPLSCIMVILITTVGIFVLIYSDNYMSHDQGYLRFFAYMGFFNTSMLGLVTSSNLIQIYFFWELVGMCSYLLIGFWFTRPIAANACQKAFVTNRVGDFGLLLGILGLYWVTGSFEFQDLFEIFNNLILNNRVNLLFLTLCAFLFFMGPIAKSAQFPLHVWLPDAMEGPTPISALIHAATMVAAGIFLVARLLPLFIVIPSIMYIISLIGIITILLGATLALAQKDIKRGLAYSTMSQLGYMMLALGMGSYRSALFHLITHAYSKALLFLGSGSIIHSMEALVGYSPDKSQNMILMGGLTKHVPITKTAFLLGTLSLCGIPPLACFWSKDEILNDSLLFSPIFAIIACSTAGLTAFYMFRIYLLTFEGHLNTYFLNYSGKKSSSVYSISLWGKEDGKKINRNFCLVPLLTMNNKKGASFFSKKTYQINNNVRNQTLITVANCALNKKIYYYPHESDNTILFPMLVLLLFTLFIGAIGIPLNQEGFNILSKLFTPSINLLHKNSTNFVDWYEFFRNATFSVSIAFFGIFIAYWLYKPFYSSLLNLTLLNSFQKWSSNPSCWEKLINCVYNWSYNRGYIDTFYKKSLTESIRRLAKQINFFDKRIIDGITNGVGITSFFVGEFTKYIGGSRISSYLFLYLSYVSLFFLFLKILN.

Transmembrane regions (helical) follow at residues 9 to 29, 40 to 60, 89 to 109, 125 to 145, 147 to 167, 185 to 205, 221 to 241, 258 to 278, 283 to 303, 327 to 347, 354 to 374, 396 to 416, 425 to 445, 547 to 567, 606 to 626, and 718 to 738; these read WIIP…LLLF, WSFL…YLSI, IDPL…FVLI, FAYM…SNLI, IYFF…FWFT, GDFG…SFEF, VNLL…IAKS, TPIS…FLVA, LFIV…ITIL, LGYM…FHLI, ALLF…VGYS, TAFL…CFWS, LLFS…TAFY, ILFP…IGIP, FSVS…KPFY, and ISSY…FLKI.

The protein belongs to the complex I subunit 5 family. NDH is composed of at least 16 different subunits, 5 of which are encoded in the nucleus.

The protein localises to the plastid. Its subcellular location is the chloroplast thylakoid membrane. It catalyses the reaction a plastoquinone + NADH + (n+1) H(+)(in) = a plastoquinol + NAD(+) + n H(+)(out). It carries out the reaction a plastoquinone + NADPH + (n+1) H(+)(in) = a plastoquinol + NADP(+) + n H(+)(out). NDH shuttles electrons from NAD(P)H:plastoquinone, via FMN and iron-sulfur (Fe-S) centers, to quinones in the photosynthetic chain and possibly in a chloroplast respiratory chain. The immediate electron acceptor for the enzyme in this species is believed to be plastoquinone. Couples the redox reaction to proton translocation, and thus conserves the redox energy in a proton gradient. The sequence is that of NAD(P)H-quinone oxidoreductase subunit 5, chloroplastic (ndhF) from Aethionema grandiflorum (Persian stone-cress).